The chain runs to 387 residues: TSC22 domain family protein 4 (387 aa).

2 disordered regions span residues 1–85 (MSGG…GEPY) and 135–232 (ISTP…RRDG). Pro residues predominate over residues 28 to 51 (SDPPAPPAPAGPPPRLPNGEPNPD). A Phosphothreonine modification is found at Thr-57. 2 positions are modified to phosphoserine: Ser-62 and Ser-165. At Thr-183 the chain carries Phosphothreonine. Ser-187 and Ser-189 each carry phosphoserine. Phosphothreonine is present on Thr-223. Residues Ser-254, Ser-258, and Ser-271 each carry the phosphoserine modification. The leucine-zipper stretch occupies residues 336-357 (LKEQIRDLAERNAALEQENGLL). Ser-362 carries the post-translational modification Phosphoserine. The disordered stretch occupies residues 368–387 (QLPSSGLPRLGPSAPNGPSI).

It belongs to the TSC-22/Dip/Bun family. Forms a homodimer or heterodimer. Forms a heterodimer with TSC22D1 isoforms 1 and 2. Interacts with NRBP1.

The protein localises to the nucleus. It is found in the cytoplasm. The protein resides in the cell projection. It localises to the dendrite. Its subcellular location is the synapse. Binds DNA and acts as a transcriptional repressor. Involved in the regulation of systematic glucose homeostasis and insulin sensitivity, via transcriptional repression of downstream insulin signaling targets such as OBP2A/LCN13. Acts as a negative regulator of lipogenic gene expression in hepatocytes and thereby mediates the control of very low-density lipoprotein release. May play a role in neurite elongation and survival. The sequence is that of TSC22 domain family protein 4 from Rattus norvegicus (Rat).